The primary structure comprises 1162 residues: Cartilage intermediate layer protein 2 (1162 aa).

Positions 1–20 are cleaved as a signal peptide; that stretch reads MASPLPLLYLCLAALHLAGA. The tract at residues 23 to 51 is disordered; that stretch reads ATPTEEHTSTARGLQGRPPDTGQPSPALE. The TSP type-1 domain occupies 146-197; sequence EAAWGAWGAWGLCSKSCGLGRRLRRRSCQSSSGDTCPGSPQEAQKCVRSRCP. 4 cysteine pairs are disulfide-bonded: Cys158–Cys191, Cys162–Cys196, Cys173–Cys181, and Cys314–Cys360. The Ig-like C2-type domain occupies 293 to 377; that stretch reads PYLVKHPESR…TVRSRAALLT (85 aa). Asn330 carries an N-linked (GlcNAc...) asparagine glycan.

In terms of processing, may be cleaved into 2 chains possibly by a furin-like protease upon or preceding secretion. N-glycosylated. Expressed in articulated and meniscal cartilage (at protein level). Also detected in heart, skeletal muscle and brain. Not detected in growth plate cartilage.

The protein localises to the secreted. Its subcellular location is the extracellular space. It is found in the extracellular matrix. In terms of biological role, may play a role in cartilage scaffolding. This Mus musculus (Mouse) protein is Cartilage intermediate layer protein 2.